The primary structure comprises 348 residues: A-type ATP synthase subunit C (348 aa).

It belongs to the V-ATPase V0D/AC39 subunit family. As to quaternary structure, has multiple subunits with at least A(3), B(3), C, D, E, F, H, I and proteolipid K(x).

It is found in the cell membrane. Its function is as follows. Component of the A-type ATP synthase that produces ATP from ADP in the presence of a proton gradient across the membrane. This chain is A-type ATP synthase subunit C, found in Halorubrum lacusprofundi (strain ATCC 49239 / DSM 5036 / JCM 8891 / ACAM 34).